A 230-amino-acid chain; its full sequence is CRP-like protein Clp (230 aa).

18–139 (PSLALDAGTI…APKILYAIGV (122 aa)) contributes to the a nucleoside 3',5'-cyclic phosphate binding site. The HTH crp-type domain maps to 158-230 (LDVTDRIVRT…GKTVVLYGTR (73 aa)). The segment at residues 190 to 209 (RQELARLVGCSREMAGRVLK) is a DNA-binding region (H-T-H motif).

In terms of assembly, homodimer.

Its subcellular location is the cytoplasm. Its activity is regulated as follows. Allosterically inhibited by cyclic di-GMP (c-di-GMP), which binds to Clp and abolishes its ability to bind its target gene promoter. Global transcriptional regulator that regulates virulence factors production by activating or repressing the expression of a large set of genes in diffusible signal factor (DSF) pathway. This chain is CRP-like protein Clp (clp), found in Xanthomonas oryzae pv. oryzae (strain MAFF 311018).